We begin with the raw amino-acid sequence, 478 residues long: Ribulose bisphosphate carboxylase large chain (478 aa).

Positions 1–2 are excised as a propeptide; it reads MS. At proline 3 the chain carries N-acetylproline. Position 14 is an N6,N6,N6-trimethyllysine (lysine 14). Substrate is bound by residues asparagine 123 and threonine 173. The Proton acceptor role is filled by lysine 175. Lysine 177 serves as a coordination point for substrate. Residues lysine 201, aspartate 203, and glutamate 204 each contribute to the Mg(2+) site. An N6-carboxylysine modification is found at lysine 201. Histidine 294 (proton acceptor) is an active-site residue. Arginine 295, histidine 327, and serine 379 together coordinate substrate.

Belongs to the RuBisCO large chain family. Type I subfamily. Heterohexadecamer of 8 large chains and 8 small chains; disulfide-linked. The disulfide link is formed within the large subunit homodimers. Mg(2+) is required as a cofactor. In terms of processing, the disulfide bond which can form in the large chain dimeric partners within the hexadecamer appears to be associated with oxidative stress and protein turnover.

The protein localises to the plastid. Its subcellular location is the chloroplast. The catalysed reaction is 2 (2R)-3-phosphoglycerate + 2 H(+) = D-ribulose 1,5-bisphosphate + CO2 + H2O. It catalyses the reaction D-ribulose 1,5-bisphosphate + O2 = 2-phosphoglycolate + (2R)-3-phosphoglycerate + 2 H(+). RuBisCO catalyzes two reactions: the carboxylation of D-ribulose 1,5-bisphosphate, the primary event in carbon dioxide fixation, as well as the oxidative fragmentation of the pentose substrate in the photorespiration process. Both reactions occur simultaneously and in competition at the same active site. This chain is Ribulose bisphosphate carboxylase large chain, found in Drimys granadensis.